Here is a 417-residue protein sequence, read N- to C-terminus: MRRWVLAIAILAAAVCFFLGAQAQEVRQGHQTERISGSAGDVLEDDPVGRLKVYVYDLPSKYNKKLLKKDPRCLNHMFAAEIFMHRFLLSSAVRTFNPEEADWFYTPVYTTCDLTPSGLPLPFKSPRMMRSAIELIATNWPYWNRSEGADHFFVTPHDFGACFHYQEEKAIGRGILPLLQRATLVQTFGQKNHVCLKDGSITIPPYAPPQKMQAHLIPPDTPRSIFVYFRGLFYDTSNDPEGGYYARGARASVWENFKNNPLFDISTDHPPTYYEDMQRSVFCLCPLGWAPWSPRLVEAVVFGCIPVIIADDIVLPFADAIPWEEIGVFVAEEDVPKLDSILTSIPTDVILRKQRLLANPSMKQAMLFPQPAQAGDAFHQILNGLARKLPHGENVFLKPGERALNWTAGPVGDLKPW.

Over 1 to 3 (MRR) the chain is Cytoplasmic. Residues 4 to 24 (WVLAIAILAAAVCFFLGAQAQ) traverse the membrane as a helical; Signal-anchor for type II membrane protein segment. Topologically, residues 25–417 (EVRQGHQTER…AGPVGDLKPW (393 aa)) are lumenal. N-linked (GlcNAc...) asparagine glycosylation is found at asparagine 144 and asparagine 405.

It belongs to the glycosyltransferase 47 family.

Its subcellular location is the golgi apparatus membrane. Its function is as follows. Involved in the synthesis of glucuronoxylan hemicellulose in secondary cell walls. This chain is Probable glucuronosyltransferase Os01g0926700, found in Oryza sativa subsp. japonica (Rice).